Here is a 108-residue protein sequence, read N- to C-terminus: uncharacterized protein (108 aa).

The helical transmembrane segment at 25 to 45 (VILKSFLLISSWVILVLLLVI) threads the bilayer.

The protein localises to the membrane. This is an uncharacterized protein from Saccharomyces cerevisiae (strain ATCC 204508 / S288c) (Baker's yeast).